Here is a 123-residue protein sequence, read N- to C-terminus: Protein Wnt-7b (123 aa).

The O-palmitoleoyl serine; by PORCN moiety is linked to residue S1. Residues V33 to T61 form a disordered linker region. C89 and C104 form a disulfide bridge. N90 carries N-linked (GlcNAc...) asparagine glycosylation.

It belongs to the Wnt family. In terms of processing, palmitoleoylation is required for efficient binding to frizzled receptors. Depalmitoleoylation leads to Wnt signaling pathway inhibition.

It is found in the secreted. Its subcellular location is the extracellular space. It localises to the extracellular matrix. Its function is as follows. Ligand for members of the frizzled family of seven transmembrane receptors that functions in the canonical Wnt/beta-catenin signaling pathway. Required for normal fusion of the chorion and the allantois during placenta development. Required for central nervous system (CNS) angiogenesis and blood-brain barrier regulation. The protein is Protein Wnt-7b (WNT-7B) of Sceloporus occidentalis (Western fence lizard).